A 368-amino-acid polypeptide reads, in one-letter code: Glutaminyl-peptide cyclotransferase (368 aa).

Positions 1 to 23 (MARERRDSKAATFFCLAWALCLA) are cleaved as a signal peptide. N53 and N65 each carry an N-linked (GlcNAc...) asparagine glycan. An intrachain disulfide couples C143 to C169. D164 serves as a coordination point for Zn(2+). E207 serves as the catalytic Proton acceptor. A Zn(2+)-binding site is contributed by E208. Catalysis depends on D254, which acts as the Proton acceptor. N292 carries N-linked (GlcNAc...) asparagine glycosylation. H336 is a Zn(2+) binding site. Residue N352 is glycosylated (N-linked (GlcNAc...) asparagine).

The protein belongs to the glutaminyl-peptide cyclotransferase family. Expressed by the venom gland.

The protein resides in the secreted. The enzyme catalyses N-terminal L-glutaminyl-[peptide] = N-terminal 5-oxo-L-prolyl-[peptide] + NH4(+). Functionally, responsible for the biosynthesis of pyroglutamyl peptides. Has a bias against acidic and tryptophan residues adjacent to the N-terminal glutaminyl residue and a lack of importance of chain length after the second residue. Also catalyzes N-terminal pyroglutamate formation. In Bothrops jararaca (Jararaca), this protein is Glutaminyl-peptide cyclotransferase (QPCT).